We begin with the raw amino-acid sequence, 422 residues long: Platelet-activating factor acetylhydrolase (422 aa).

Residues 1-21 form the signal peptide; it reads MASLWVRARRVFMKSRASGFS. Ser-266 functions as the Nucleophile in the catalytic mechanism. The Charge relay system role is filled by Asp-289. Asn-331 carries an N-linked (GlcNAc...) asparagine glycan. The active-site Charge relay system is His-345.

This sequence belongs to the AB hydrolase superfamily. Lipase family. Plasma.

Its subcellular location is the secreted. It localises to the extracellular space. It catalyses the reaction a 1-O-alkyl-2-acetyl-sn-glycero-3-phosphocholine + H2O = a 1-O-alkyl-sn-glycero-3-phosphocholine + acetate + H(+). Functionally, modulates the action of platelet-activating factor (PAF) by hydrolyzing the sn-2 ester bond to yield the biologically inactive lyso-PAF. Has a specificity for substrates with a short residue at the sn-2 position. It is inactive against long-chain phospholipids. The protein is Platelet-activating factor acetylhydrolase (PLA2G7) of Gallus gallus (Chicken).